A 468-amino-acid chain; its full sequence is 3-isopropylmalate dehydratase large subunit (468 aa).

[4Fe-4S] cluster contacts are provided by C346, C406, and C409.

Belongs to the aconitase/IPM isomerase family. LeuC type 1 subfamily. As to quaternary structure, heterodimer of LeuC and LeuD. It depends on [4Fe-4S] cluster as a cofactor.

It carries out the reaction (2R,3S)-3-isopropylmalate = (2S)-2-isopropylmalate. Its pathway is amino-acid biosynthesis; L-leucine biosynthesis; L-leucine from 3-methyl-2-oxobutanoate: step 2/4. Its function is as follows. Catalyzes the isomerization between 2-isopropylmalate and 3-isopropylmalate, via the formation of 2-isopropylmaleate. The protein is 3-isopropylmalate dehydratase large subunit of Cyanothece sp. (strain PCC 7425 / ATCC 29141).